Consider the following 185-residue polypeptide: Biogenesis of lysosome-related organelles complex 1 subunit 5 (185 aa).

The interval 1–25 (MSGGGTETPVACDAAQGGKKRDSLG) is disordered. The residue at position 2 (Ser-2) is an N-acetylserine.

This sequence belongs to the BLOC1S5 family. Octamer composed of one copy each BLOC1S1, BLOC1S2, BLOC1S3, BLOC1S4, BLOC1S5, BLOC1S6, DTNBP1/BLOC1S7 and SNAPIN/BLOC1S8. Component of the biogenesis of lysosome-related organelles complex 1 (BLOC-1) composed of BLOC1S1, BLOC1S2, BLOC1S3, BLOC1S4, BLOC1S5, BLOC1S6, DTNBP1/BLOC1S7 and SNAPIN/BLOC1S8. The BLOC-1 complex associates with the AP-3 protein complex and membrane protein cargos. Interacts with BLOC1S4, BLOC1S6, DTNBP1/BLOC1S7 and PI4K2A. As to expression, detected in heart, brain, spleen, lung, kidney and testis.

In terms of biological role, component of the BLOC-1 complex, a complex that is required for normal biogenesis of lysosome-related organelles (LRO), such as platelet dense granules and melanosomes. In concert with the AP-3 complex, the BLOC-1 complex is required to target membrane protein cargos into vesicles assembled at cell bodies for delivery into neurites and nerve terminals. The BLOC-1 complex, in association with SNARE proteins, is also proposed to be involved in neurite extension. Plays a role in intracellular vesicle trafficking. The chain is Biogenesis of lysosome-related organelles complex 1 subunit 5 (Bloc1s5) from Mus musculus (Mouse).